The sequence spans 217 residues: Growth hormone variant (217 aa).

The first 26 residues, 1–26 (MAAGSWTCLILAIALLCLPWLQEGSA), serve as a signal peptide directing secretion. 2 disulfides stabilise this stretch: Cys79–Cys191 and Cys208–Cys215. 2 positions are modified to phosphoserine: Ser132 and Ser176.

This sequence belongs to the somatotropin/prolactin family. Expressed in the placenta.

It is found in the secreted. Plays an important role in growth control. Its major role in stimulating body growth is to stimulate the liver and other tissues to secrete IGF1. It stimulates both the differentiation and proliferation of myoblasts. It also stimulates amino acid uptake and protein synthesis in muscle and other tissues. The chain is Growth hormone variant (GH2) from Macaca mulatta (Rhesus macaque).